Here is a 186-residue protein sequence, read N- to C-terminus: Elongation factor P (186 aa).

This sequence belongs to the elongation factor P family.

The protein resides in the cytoplasm. It functions in the pathway protein biosynthesis; polypeptide chain elongation. In terms of biological role, involved in peptide bond synthesis. Stimulates efficient translation and peptide-bond synthesis on native or reconstituted 70S ribosomes in vitro. Probably functions indirectly by altering the affinity of the ribosome for aminoacyl-tRNA, thus increasing their reactivity as acceptors for peptidyl transferase. The sequence is that of Elongation factor P from Shewanella baltica (strain OS223).